A 102-amino-acid chain; its full sequence is Class I hydrophobin 1 (102 aa).

Positions 1–18 (MSLFKILVAAATVATALA) are cleaved as a signal peptide. Disulfide bonds link Cys37-Cys84, Cys45-Cys78, Cys46-Cys63, and Cys85-Cys97.

This sequence belongs to the fungal hydrophobin family.

It localises to the secreted. Its subcellular location is the cell wall. Aerial growth, conidiation, and dispersal of filamentous fungi in the environment rely upon a capability of their secreting small amphipathic proteins called hydrophobins (HPBs) with low sequence identity. Class I can self-assemble into an outermost layer of rodlet bundles on aerial cell surfaces, conferring cellular hydrophobicity that supports fungal growth, development and dispersal; whereas Class II form highly ordered films at water-air interfaces through intermolecular interactions but contribute nothing to the rodlet structure. Hyd1 is essential for stress tolerance, conidial hydrophobicity, adhesion to insect cuticle, and insect infectivity/pathogenicity. Plays a neglectable role in hyphal growth and asexual development. This Metarhizium robertsii (strain ARSEF 23 / ATCC MYA-3075) (Metarhizium anisopliae (strain ARSEF 23)) protein is Class I hydrophobin 1.